The primary structure comprises 248 residues: Ras-like protein family member 11B (248 aa).

The small GTPase-like stretch occupies residues 29–246 (AGRRLVKIAV…ALSAKVRTVT (218 aa)). GTP contacts are provided by residues 40–47 (GASGVGKT), 87–94 (DTPGIQVH), and 152–155 (NKAD). Residues 205 to 226 (QQPSSTPEKRRTSLIPRPKSPN) form a disordered region.

It belongs to the small GTPase superfamily. Ras family. In terms of tissue distribution, widely expressed with highest levels in placenta and primary macrophages.

The catalysed reaction is GTP + H2O = GDP + phosphate + H(+). This chain is Ras-like protein family member 11B, found in Homo sapiens (Human).